Here is a 1227-residue protein sequence, read N- to C-terminus: Methionine synthase (1227 aa).

The 324-residue stretch at 2 to 325 (SSKVEQLRAQ…EHIAAMSRAV (324 aa)) folds into the Hcy-binding domain. Zn(2+) contacts are provided by Cys247, Cys310, and Cys311. Positions 356–617 (FVNVGERTNV…LPAELRDAVE (262 aa)) constitute a Pterin-binding domain. Residues 650–744 (QQAEWRSWDV…FIEASKEKGS (95 aa)) enclose the B12-binding N-terminal domain. Residues Glu694, 756–760 (GDVHD), His759, Ser804, Thr808, and Ala860 each bind methylcob(III)alamin. In terms of domain architecture, B12-binding spans 746–881 (NGKMVIATVK…SDTQRDDFVA (136 aa)). The 331-residue stretch at 897–1227 (KKPRTPPVTL…LAPNLGYDAD (331 aa)) folds into the AdoMet activation domain. S-adenosyl-L-methionine is bound by residues Asp946, Arg1134, and 1189-1190 (YF).

The protein belongs to the vitamin-B12 dependent methionine synthase family. Methylcob(III)alamin is required as a cofactor. Zn(2+) serves as cofactor.

It catalyses the reaction (6S)-5-methyl-5,6,7,8-tetrahydrofolate + L-homocysteine = (6S)-5,6,7,8-tetrahydrofolate + L-methionine. The protein operates within amino-acid biosynthesis; L-methionine biosynthesis via de novo pathway; L-methionine from L-homocysteine (MetH route): step 1/1. Its function is as follows. Catalyzes the transfer of a methyl group from methyl-cobalamin to homocysteine, yielding enzyme-bound cob(I)alamin and methionine. Subsequently, remethylates the cofactor using methyltetrahydrofolate. The chain is Methionine synthase (metH) from Salmonella typhimurium (strain LT2 / SGSC1412 / ATCC 700720).